A 206-amino-acid chain; its full sequence is Ribosomal RNA large subunit methyltransferase E (206 aa).

Residues Gly-60, Trp-62, Asp-80, Asp-96, and Asp-121 each coordinate S-adenosyl-L-methionine. Lys-161 functions as the Proton acceptor in the catalytic mechanism.

It belongs to the class I-like SAM-binding methyltransferase superfamily. RNA methyltransferase RlmE family.

It is found in the cytoplasm. It catalyses the reaction uridine(2552) in 23S rRNA + S-adenosyl-L-methionine = 2'-O-methyluridine(2552) in 23S rRNA + S-adenosyl-L-homocysteine + H(+). In terms of biological role, specifically methylates the uridine in position 2552 of 23S rRNA at the 2'-O position of the ribose in the fully assembled 50S ribosomal subunit. In Francisella tularensis subsp. holarctica (strain FTNF002-00 / FTA), this protein is Ribosomal RNA large subunit methyltransferase E.